A 349-amino-acid chain; its full sequence is Protein DMR6-LIKE OXYGENASE 1 (349 aa).

A Fe2OG dioxygenase domain is found at 197–296 (HAQHMAFNYY…RLSIPTFYFP (100 aa)). Tyrosine 206 contacts 2-oxoglutarate. Fe cation-binding residues include histidine 221, aspartate 223, and histidine 277. Arginine 287 and serine 289 together coordinate 2-oxoglutarate.

Belongs to the iron/ascorbate-dependent oxidoreductase family. The cofactor is L-ascorbate. Fe(2+) is required as a cofactor.

It carries out the reaction salicylate + NADH + O2 + H(+) = 2,3-dihydroxybenzoate + NAD(+) + H2O. Functionally, converts salicylic acid (SA) to both 2,3-dihydroxybenzoic acid (2,3-DHBA) and 2,5-DHBA in vitro but only 2,3-DHBA in vivo. Component of a negative feedback regulation system of SA levels during senescence. Regulates both onset and progression of leaf senescence. Negative regulator of defense against Hyaloperonospora arabidopsidis. Its function is as follows. (Microbial infection) Confers susceptibility to the downy mildew pathogen Hyaloperonospora arabidopsidis. The polypeptide is Protein DMR6-LIKE OXYGENASE 1 (Arabidopsis thaliana (Mouse-ear cress)).